A 532-amino-acid polypeptide reads, in one-letter code: E3 ubiquitin-protein ligase ICP0 (532 aa).

Zn(2+) is bound by residues Cys8, Cys11, Cys24, His26, Cys29, Cys32, Cys43, and Cys46. The segment at 8–47 (CPICLEDPSNYSMALPCLHAFCYVCITRWIRQNPTCPLCK) adopts an RING-type zinc-finger fold. Disordered stretches follow at residues 206–391 (EYID…PMRP), 406–426 (APRD…AGPR), 461–498 (EDES…IRQG), and 510–532 (QTQP…RRNQ). Acidic residues-rich tracts occupy residues 217–227 (SEEETDSDIEV) and 234–243 (DPEDTSDETS). The span at 286-295 (RSARLRRRQP) shows a compositional bias: basic residues.

Auto-ubiquitinated.

The enzyme catalyses S-ubiquitinyl-[E2 ubiquitin-conjugating enzyme]-L-cysteine + [acceptor protein]-L-lysine = [E2 ubiquitin-conjugating enzyme]-L-cysteine + N(6)-ubiquitinyl-[acceptor protein]-L-lysine.. In terms of biological role, evades nuclear antiviral defenses triggered by dsDNA viruses. Acts during the initial stages of lytic infection and the reactivation of latent viral genome. Prevents the antiviral effect of nuclear bodies by degrading host PML and SP100. The sequence is that of E3 ubiquitin-protein ligase ICP0 (63) from Equus caballus (Horse).